Here is a 332-residue protein sequence, read N- to C-terminus: tRNA-dihydrouridine synthase B (332 aa).

FMN contacts are provided by residues 19-21 and Q73; that span reads PMA. C103 acts as the Proton donor in catalysis. Residues K142, 203-205, and 227-228 each bind FMN; these read NGD and GR.

It belongs to the Dus family. DusB subfamily. The cofactor is FMN.

It catalyses the reaction a 5,6-dihydrouridine in tRNA + NAD(+) = a uridine in tRNA + NADH + H(+). It carries out the reaction a 5,6-dihydrouridine in tRNA + NADP(+) = a uridine in tRNA + NADPH + H(+). Functionally, catalyzes the synthesis of 5,6-dihydrouridine (D), a modified base found in the D-loop of most tRNAs, via the reduction of the C5-C6 double bond in target uridines. The sequence is that of tRNA-dihydrouridine synthase B from Pseudomonas aeruginosa (strain ATCC 15692 / DSM 22644 / CIP 104116 / JCM 14847 / LMG 12228 / 1C / PRS 101 / PAO1).